The primary structure comprises 204 residues: MQRDPAGAPRPAGASAAAPDLAGDPAFVLLGEFGRAHGLQGEVRLKSYTADPMAIGSYGPLTGANGRAIALTALRPASGAPDMLIARVSGVSGRDAAEALNRLALYVRRECLGAPEDEDEFFSADLIGLAVVDAAGTRLGTIRAVPNYGGGDLLEIEPTGGGAAALLPFTRAFVPKVDIAAREVTIDPPDDLFAPAKPSPEDEV.

Residues 117–192 form the PRC barrel domain; the sequence is DEDEFFSADL…EVTIDPPDDL (76 aa).

Belongs to the RimM family. As to quaternary structure, binds ribosomal protein uS19.

It is found in the cytoplasm. In terms of biological role, an accessory protein needed during the final step in the assembly of 30S ribosomal subunit, possibly for assembly of the head region. Essential for efficient processing of 16S rRNA. May be needed both before and after RbfA during the maturation of 16S rRNA. It has affinity for free ribosomal 30S subunits but not for 70S ribosomes. The protein is Ribosome maturation factor RimM of Methylobacterium nodulans (strain LMG 21967 / CNCM I-2342 / ORS 2060).